A 131-amino-acid chain; its full sequence is Ribosome-binding factor A (131 aa).

The protein belongs to the RbfA family. Monomer. Binds 30S ribosomal subunits, but not 50S ribosomal subunits or 70S ribosomes.

It localises to the cytoplasm. Its function is as follows. One of several proteins that assist in the late maturation steps of the functional core of the 30S ribosomal subunit. Associates with free 30S ribosomal subunits (but not with 30S subunits that are part of 70S ribosomes or polysomes). Required for efficient processing of 16S rRNA. May interact with the 5'-terminal helix region of 16S rRNA. In Thermotoga sp. (strain RQ2), this protein is Ribosome-binding factor A.